A 244-amino-acid chain; its full sequence is Precorrin-6A reductase (244 aa).

Belongs to the precorrin-6x reductase family.

The catalysed reaction is precorrin-6B + NADP(+) = precorrin-6A + NADPH + 2 H(+). It functions in the pathway cofactor biosynthesis; adenosylcobalamin biosynthesis; cob(II)yrinate a,c-diamide from precorrin-2 (aerobic route): step 6/10. Catalyzes the reduction of the macrocycle of precorrin-6X into precorrin-6Y. The sequence is that of Precorrin-6A reductase (cobK) from Mycobacterium tuberculosis (strain CDC 1551 / Oshkosh).